A 322-amino-acid chain; its full sequence is MTQQRHNWTLKEVEALFTLPFNDLLFQAHSIHRKNFDPNQVQISSLLNIKTGACPEDCLYCSQSSKYDTGLEREKLMEIDLVLKQAKQAQDNGATRFCMGAAWRNPTDKSINKVIPMIQGVKDMGMETCVTLGMLTQKQAFVLKEVGLDYYNHNIDTSKENYSNIVTTRNFQDRLNTLESVQNANIRVCSGGILGLGEDQTDRASMLRSLSNLAIHPDSVPLNLLVPIPGTPFENIEPPTESEFIRTIAVARIMMPKSVVRLSAGRTKMGDTMQALCFFAGANSIFYGEQLLTTDNPNTDSDQDLFVRLGINQKQANNLQSV.

The region spanning 39 to 266 (NQVQISSLLN…KSVVRLSAGR (228 aa)) is the Radical SAM core domain. Positions 54, 58, and 61 each coordinate [4Fe-4S] cluster. [2Fe-2S] cluster-binding residues include cysteine 98, cysteine 129, cysteine 189, and arginine 261.

It belongs to the radical SAM superfamily. Biotin synthase family. Homodimer. Requires [4Fe-4S] cluster as cofactor. The cofactor is [2Fe-2S] cluster.

It catalyses the reaction (4R,5S)-dethiobiotin + (sulfur carrier)-SH + 2 reduced [2Fe-2S]-[ferredoxin] + 2 S-adenosyl-L-methionine = (sulfur carrier)-H + biotin + 2 5'-deoxyadenosine + 2 L-methionine + 2 oxidized [2Fe-2S]-[ferredoxin]. It functions in the pathway cofactor biosynthesis; biotin biosynthesis; biotin from 7,8-diaminononanoate: step 2/2. In terms of biological role, catalyzes the conversion of dethiobiotin (DTB) to biotin by the insertion of a sulfur atom into dethiobiotin via a radical-based mechanism. The chain is Biotin synthase from Vesicomyosocius okutanii subsp. Calyptogena okutanii (strain HA).